We begin with the raw amino-acid sequence, 832 residues long: Cadherin-like protein 26 (832 aa).

The signal sequence occupies residues 1–27 (MAMRSGRHPSLLLLLVLLLWLLQVSII). Residues 28–614 (DSVQQETDDL…ELADAEVGLH (587 aa)) lie on the Extracellular side of the membrane. Cadherin domains lie at 35-165 (DDLT…APQF), 166-275 (PEKE…RPAF), 276-396 (TQEN…PPAF), and 397-500 (HPQS…VPTL). N-linked (GlcNAc...) asparagine glycans are attached at residues N81, N85, N171, and N177. N462 carries N-linked (GlcNAc...) asparagine glycosylation. The chain crosses the membrane as a helical span at residues 615–635 (VGALFPVCAAFVALAVALLFL). Residues 636-832 (LRCYFVLEPK…EIYSESGVPS (197 aa)) are Cytoplasmic-facing. Positions 813–832 (SLGSKATPFEEIYSESGVPS) are disordered.

Homodimer. Component of a cadherin:catenin adhesion complex composed of at least of CDH26, beta-catenin/CTNNB1, alpha-catenin/CTNNA1 and p120 catenin/CTNND1. N-glycosylated. Expressed by epithelial cells of gastrointestinal tissue.

It localises to the cell membrane. Its function is as follows. Cadherins are calcium-dependent cell adhesion proteins. They preferentially interact with themselves in a homophilic manner in connecting cells; cadherins may thus contribute to the sorting of heterogeneous cell types. Ligand for integrins alpha-E/beta-7, ITGAE:ITGAB7, alpha-4/beta-7, ITGA4:ITGAB7 and alpha-4/beta-1, ITGA4:ITGAB1 through which modulates CD4(+) T cells activation. The chain is Cadherin-like protein 26 (CDH26) from Homo sapiens (Human).